We begin with the raw amino-acid sequence, 975 residues long: 26S proteasome non-ATPase regulatory subunit 1 (975 aa).

The interval 272-303 is disordered; sequence EKKSTTTTTTTPASDSMEIDIDSGNEKSGGSS. PC repeat units lie at residues 393-426, 431-464, 465-499, 500-534, 536-569, 570-605, 606-638, 640-674, 675-715, and 718-748; these read SAIS…NQTP, GSLY…ILHH, GASL…VSGE, AAGL…EKTI, SLSM…LIRY, GGMY…SVRR, AAVT…PHVR, GAAF…YVKQ, AAWI…DSMS, and GAVL…NMNA. Disordered stretches follow at residues 832–882 and 922–975; these read SSRS…KSNP and PEQL…EFTE. 2 stretches are compositionally biased toward basic and acidic residues: residues 842–880 and 926–935; these read DVEK…ERKS and VVKEKPETKQ. The segment covering 944-961 has biased composition (low complexity); it reads TATATASLPNATTTTSPT.

This sequence belongs to the proteasome subunit S1 family.

In terms of biological role, acts as a regulatory subunit of the 26 proteasome which is involved in the ATP-dependent degradation of ubiquitinated proteins. In Dictyostelium discoideum (Social amoeba), this protein is 26S proteasome non-ATPase regulatory subunit 1 (psmD1).